Consider the following 301-residue polypeptide: Cilia- and flagella-associated protein 161 (301 aa).

The interval Gly-269–Gln-301 is disordered.

As to quaternary structure, microtubule inner protein component of sperm flagellar doublet microtubules. As to expression, expressed in airway epithelial cells.

The protein resides in the cytoplasm. Its subcellular location is the cytoskeleton. It localises to the cilium axoneme. It is found in the flagellum axoneme. Functionally, microtubule inner protein (MIP) part of the dynein-decorated doublet microtubules (DMTs) in cilia axoneme, which is required for motile cilia beating. The polypeptide is Cilia- and flagella-associated protein 161 (Homo sapiens (Human)).